Consider the following 212-residue polypeptide: Protein HP-25 homolog 1 (212 aa).

The signal sequence occupies residues 1–34 (MPGGRRRVGSMNIAGFWILAQFVLLLVANVKSSA). The disordered stretch occupies residues 36–66 (SELCGPRGARGPPGLSGLPGPPGYTGPIGMP). The segment covering 40 to 53 (GPRGARGPPGLSGL) has biased composition (low complexity). The region spanning 40 to 76 (GPRGARGPPGLSGLPGPPGYTGPIGMPGLTGRPGLPG) is the Collagen-like domain. Positions 82 to 212 (PPLPQSAFSV…VFYGFLLNGN (131 aa)) constitute a C1q domain. Asparagine 125 is a glycosylation site (N-linked (GlcNAc...) asparagine).

The protein localises to the secreted. The polypeptide is Protein HP-25 homolog 1 (Bos taurus (Bovine)).